The sequence spans 484 residues: Replication factor C large subunit (484 aa).

46 to 53 (GPPGSGKT) lines the ATP pocket. Composition is skewed to basic and acidic residues over residues 419 to 432 (VKTE…KTKE), 442 to 451 (RISEPPEPLK), and 459 to 478 (KSVE…KKQA). The segment at 419 to 484 (VKTETPKKKE…KKQATLDSFF (66 aa)) is disordered.

It belongs to the activator 1 small subunits family. RfcL subfamily. Heteromultimer composed of small subunits (RfcS) and large subunits (RfcL).

Its function is as follows. Part of the RFC clamp loader complex which loads the PCNA sliding clamp onto DNA. This chain is Replication factor C large subunit, found in Methanococcus maripaludis (strain C5 / ATCC BAA-1333).